Here is a 348-residue protein sequence, read N- to C-terminus: Holliday junction branch migration complex subunit RuvB (348 aa).

A large ATPase domain (RuvB-L) region spans residues 4–198 (TTDYGASNTG…FGFTAHLDFY (195 aa)). Residues L37, R38, G79, K82, T83, T84, 145 to 147 (EDF), R188, Y198, and R235 each bind ATP. Position 83 (T83) interacts with Mg(2+). Residues 199–269 (PHEELEKLIE…DVKEALALYQ (71 aa)) are small ATPAse domain (RuvB-S). Residues 272–348 (SEGLDRLDIA…DIIFGNYAQR (77 aa)) form a head domain (RuvB-H) region. Residues R327 and R332 each coordinate DNA.

It belongs to the RuvB family. As to quaternary structure, homohexamer. Forms an RuvA(8)-RuvB(12)-Holliday junction (HJ) complex. HJ DNA is sandwiched between 2 RuvA tetramers; dsDNA enters through RuvA and exits via RuvB. An RuvB hexamer assembles on each DNA strand where it exits the tetramer. Each RuvB hexamer is contacted by two RuvA subunits (via domain III) on 2 adjacent RuvB subunits; this complex drives branch migration. In the full resolvosome a probable DNA-RuvA(4)-RuvB(12)-RuvC(2) complex forms which resolves the HJ.

The protein localises to the cytoplasm. It carries out the reaction ATP + H2O = ADP + phosphate + H(+). In terms of biological role, the RuvA-RuvB-RuvC complex processes Holliday junction (HJ) DNA during genetic recombination and DNA repair, while the RuvA-RuvB complex plays an important role in the rescue of blocked DNA replication forks via replication fork reversal (RFR). RuvA specifically binds to HJ cruciform DNA, conferring on it an open structure. The RuvB hexamer acts as an ATP-dependent pump, pulling dsDNA into and through the RuvAB complex. RuvB forms 2 homohexamers on either side of HJ DNA bound by 1 or 2 RuvA tetramers; 4 subunits per hexamer contact DNA at a time. Coordinated motions by a converter formed by DNA-disengaged RuvB subunits stimulates ATP hydrolysis and nucleotide exchange. Immobilization of the converter enables RuvB to convert the ATP-contained energy into a lever motion, pulling 2 nucleotides of DNA out of the RuvA tetramer per ATP hydrolyzed, thus driving DNA branch migration. The RuvB motors rotate together with the DNA substrate, which together with the progressing nucleotide cycle form the mechanistic basis for DNA recombination by continuous HJ branch migration. Branch migration allows RuvC to scan DNA until it finds its consensus sequence, where it cleaves and resolves cruciform DNA. This chain is Holliday junction branch migration complex subunit RuvB, found in Bifidobacterium longum (strain DJO10A).